Here is a 346-residue protein sequence, read N- to C-terminus: UDP-3-O-acylglucosamine N-acyltransferase (346 aa).

H253 acts as the Proton acceptor in catalysis.

The protein belongs to the transferase hexapeptide repeat family. LpxD subfamily. Homotrimer.

The catalysed reaction is a UDP-3-O-[(3R)-3-hydroxyacyl]-alpha-D-glucosamine + a (3R)-hydroxyacyl-[ACP] = a UDP-2-N,3-O-bis[(3R)-3-hydroxyacyl]-alpha-D-glucosamine + holo-[ACP] + H(+). The protein operates within bacterial outer membrane biogenesis; LPS lipid A biosynthesis. In terms of biological role, catalyzes the N-acylation of UDP-3-O-acylglucosamine using 3-hydroxyacyl-ACP as the acyl donor. Is involved in the biosynthesis of lipid A, a phosphorylated glycolipid that anchors the lipopolysaccharide to the outer membrane of the cell. The sequence is that of UDP-3-O-acylglucosamine N-acyltransferase from Rickettsia prowazekii (strain Madrid E).